A 255-amino-acid polypeptide reads, in one-letter code: 28.1 kDa virulence protein (255 aa).

The protein belongs to the SpvA family.

Functionally, not known. This protein is involved in the virulence of salmonellas. This Salmonella typhimurium protein is 28.1 kDa virulence protein (mkaB).